We begin with the raw amino-acid sequence, 459 residues long: Autophagy-related protein 18 (459 aa).

WD repeat units follow at residues 1-39 (MTSP…RIFS) and 188-228 (AHRS…KLYQ). Residues 229-232 (FRRG) form a necessary for proper localization to vacuole membrane region. The L/FRRG motif signature appears at 229 to 233 (FRRGT). A WD 3 repeat occupies 233-272 (TYPSTIYSMSFNLSSTLLCVSSTSDTIHIFRLGAPPGNTT). Residues 264–339 (LGAPPGNTTP…RGSGSFSSML (76 aa)) are disordered. The span at 265–277 (GAPPGNTTPAGAP) shows a compositional bias: low complexity. The span at 285–296 (RQDRWSRARSYD) shows a compositional bias: basic and acidic residues. Gly residues predominate over residues 319–330 (PGAGNNQGGHTR). A WD 4 repeat occupies 393 to 433 (APGGPLRSVVAMSSSSPQVMVVTSDGGFYVYNIDMEHGGEG).

This sequence belongs to the WD repeat PROPPIN family. As to quaternary structure, component of the PI(3,5)P2 regulatory complex. Interacts with ATG2 and ATG9. The ATG2-ATG18 complex is essential for autophagosome formation.

It is found in the preautophagosomal structure membrane. It localises to the vacuole membrane. The protein resides in the endosome membrane. Component of the PI(3,5)P2 regulatory complex that regulates both the synthesis and turnover of phosphatidylinositol 3,5-bisphosphate (PtdIns(3,5)P2). Plays an important role in osmotically-induced vacuole fragmentation. Required for cytoplasm to vacuole transport (Cvt) vesicle formation, pexophagy and starvation-induced autophagy. Involved in correct ATG9 trafficking to the pre-autophagosomal structure. With ATG2, protects ATG8 from ATG4-mediated cleavage. Autophagy is required for proper vegetative growth, asexual/sexual reproduction, and full virulence. Autophagy is particularly involved in the biosynthesis of deoxynivalenol (DON), an important virulence determinant. The sequence is that of Autophagy-related protein 18 from Gibberella zeae (strain ATCC MYA-4620 / CBS 123657 / FGSC 9075 / NRRL 31084 / PH-1) (Wheat head blight fungus).